The sequence spans 212 residues: 3-isopropylmalate dehydratase small subunit (212 aa).

This sequence belongs to the LeuD family. LeuD type 1 subfamily. Heterodimer of LeuC and LeuD.

The catalysed reaction is (2R,3S)-3-isopropylmalate = (2S)-2-isopropylmalate. The protein operates within amino-acid biosynthesis; L-leucine biosynthesis; L-leucine from 3-methyl-2-oxobutanoate: step 2/4. Functionally, catalyzes the isomerization between 2-isopropylmalate and 3-isopropylmalate, via the formation of 2-isopropylmaleate. The chain is 3-isopropylmalate dehydratase small subunit from Methylococcus capsulatus (strain ATCC 33009 / NCIMB 11132 / Bath).